The sequence spans 206 residues: Halorhodopsin (206 aa).

Residues 1 to 15 (IALAGLSILLFVYMG) form a helical membrane-spanning segment. Topologically, residues 16 to 21 (RNVEDP) are cytoplasmic. A helical transmembrane segment spans residues 22-45 (RAQLIFVATLMVPLVSISSYTGLV). Topologically, residues 46-75 (SGLTVGFLEMPAGHALAGMGAGPEGGVFTP) are extracellular. The chain crosses the membrane as a helical span at residues 76–97 (WGRYLTWAFSTPMILIALGLLA). Topologically, residues 98 to 100 (GSN) are cytoplasmic. Residues 101–124 (MSKLFTAVVADVGMCITGLAAALT) traverse the membrane as a helical segment. The Extracellular portion of the chain corresponds to 125 to 127 (TSS). A helical membrane pass occupies residues 128-150 (YLLRWVWYGISCAFFVVVLYILL). Residues 151 to 162 (AEWAKDAEVAGT) are Cytoplasmic-facing. Residues 163-186 (ADIFNTLKVLTVVLWLGYPIFWAL) form a helical membrane-spanning segment. The Extracellular portion of the chain corresponds to 187–195 (GAEGLAVLD). The chain crosses the membrane as a helical span at residues 196–206 (IAITSWAYSGM).

The protein belongs to the archaeal/bacterial/fungal opsin family.

The protein resides in the cell membrane. Its function is as follows. Light-driven chloride pump. This chain is Halorhodopsin (hop), found in Halobacterium halobium (strain mex).